We begin with the raw amino-acid sequence, 393 residues long: Alpha-1,2 mannosyltransferase KTR1 (393 aa).

Topologically, residues Met1 to Lys16 are cytoplasmic. The helical; Signal-anchor for type II membrane protein transmembrane segment at Leu17–Ala34 threads the bilayer. The interval Gln35 to Gly68 is stem region. The Lumenal segment spans residues Gln35 to Gly393. The segment at Pro69–Gly393 is catalytic. Residue Asn120 is glycosylated (N-linked (GlcNAc...) asparagine). Glu280 functions as the Nucleophile in the catalytic mechanism.

It belongs to the glycosyltransferase 15 family. The cofactor is Mn(2+). Post-translationally, N-glycosylated.

It is found in the golgi apparatus membrane. Its pathway is protein modification; protein glycosylation. Mannosyltransferase that transfers a mannose residue from GDP-mannose to a range of acceptors in vitro, forming an alpha-(1-&gt;2)-D-mannosyl-D-mannose linkage. This is Alpha-1,2 mannosyltransferase KTR1 (KTR1) from Saccharomyces cerevisiae (strain ATCC 204508 / S288c) (Baker's yeast).